Reading from the N-terminus, the 102-residue chain is Major basic nuclear protein 2 (102 aa).

Residues 1–11 (MKAMKATKKAM) are compositionally biased toward basic residues. The segment at 1–43 (MKAMKATKKAMTKTGLAEALAPKPSSARRIAPPSSRAWPPSAQ) is disordered. Residues 21 to 42 (APKPSSARRIAPPSSRAWPPSA) show a composition bias toward low complexity.

The protein resides in the nucleus. The sequence is that of Major basic nuclear protein 2 (HCc2) from Crypthecodinium cohnii (Dinoflagellate).